The primary structure comprises 449 residues: Serine/threonine-protein phosphatase 2A activator 2 (449 aa).

Disordered regions lie at residues Met-1–Thr-72 and Met-378–Trp-416. A compositionally biased stretch (pro residues) spans Asn-54–Asp-69. Over residues Glu-389–Asp-403 the composition is skewed to acidic residues.

The protein belongs to the PTPA-type PPIase family.

The protein localises to the cytoplasm. It catalyses the reaction [protein]-peptidylproline (omega=180) = [protein]-peptidylproline (omega=0). Its function is as follows. PPIases accelerate the folding of proteins. It catalyzes the cis-trans isomerization of proline imidic peptide bonds in oligopeptides. Acts as a regulatory subunit for PP2A-like phosphatases modulating their activity or substrate specificity, probably by inducing a conformational change in the catalytic subunit, a direct target of the PPIase. Can reactivate inactive phosphatase PP2A-phosphatase methylesterase complexes (PP2Ai) in presence of ATP and Mg(2+) by dissociating the inactive form from the complex. The polypeptide is Serine/threonine-protein phosphatase 2A activator 2 (rrd-2) (Neurospora crassa (strain ATCC 24698 / 74-OR23-1A / CBS 708.71 / DSM 1257 / FGSC 987)).